The sequence spans 444 residues: C4-dicarboxylate transport protein (444 aa).

Helical transmembrane passes span 7 to 29 (LYKS…GHFY), 44 to 66 (IKLI…IAGM), 79 to 101 (ALLY…VNVV), 143 to 165 (IVGA…FGFA), 186 to 208 (VMFN…AMAF), 221 to 243 (LGQL…LGAI), 291 to 313 (VVGL…YLTM), and 353 to 375 (FIVL…ALIL). Residues 418–444 (SGGRAISDTREEDDLGVAEGPTPTTVK) form a disordered region.

This sequence belongs to the dicarboxylate/amino acid:cation symporter (DAACS) (TC 2.A.23) family.

It localises to the cell inner membrane. In terms of biological role, responsible for the transport of dicarboxylates such as succinate, fumarate, and malate from the periplasm across the inner membrane. In Pseudomonas chlororaphis (Pseudomonas aureofaciens), this protein is C4-dicarboxylate transport protein.